A 170-amino-acid chain; its full sequence is Myelin-associated oligodendrocyte basic protein (170 aa).

Residues 69–170 (SRRATSPQRP…GSPTRAPRFW (102 aa)) are disordered. Residues 82–92 (PAASPVVVRAP) are compositionally biased toward low complexity. A phosphoserine mark is found at S85, S98, and S107. A run of 2 repeats spans residues 93-101 (PAKPKSPLM) and 105-110 (PRSPPR). Residues 93-115 (PAKPKSPLMPAKPRSPPRPAKPR) are 3 X 9 AA approximate tandem repeats. Residues 111–115 (PAKPR) form a 3; half-length repeat. Residues 118–130 (SRTERQPRPRPEV) show a composition bias toward basic and acidic residues. Over residues 138–151 (KPPQKSKQPARSSP) the composition is skewed to low complexity.

It is found in the cytoplasm. It localises to the perinuclear region. In terms of biological role, may play a role in compacting or stabilizing the myelin sheath possibly by binding the negatively charged acidic phospholipids of the cytoplasmic membrane. The chain is Myelin-associated oligodendrocyte basic protein (Mobp) from Mus musculus (Mouse).